The primary structure comprises 603 residues: Putative lipase atg15 (603 aa).

Over 1–20 the chain is Cytoplasmic; the sequence is MDQPHRRTRKWHLMDLSVST. The helical; Signal-anchor for type II membrane protein transmembrane segment at 21–41 threads the bilayer; the sequence is LLMSLALVLPSCVSAYQPVYF. At 42-603 the chain is on the lumenal side; that stretch reads RSQEATPFIP…ITPAPILIDL (562 aa). Asn166, Asn201, Asn223, Asn281, and Asn305 each carry an N-linked (GlcNAc...) asparagine glycan. Ser321 acts as the Charge relay system in catalysis. Asn467 carries N-linked (GlcNAc...) asparagine glycosylation.

The protein belongs to the AB hydrolase superfamily. Lipase family. In terms of assembly, binds to both phosphatidylinositol (PI) and phosphatidylinositol 3,5-bisphosphate (PIP2).

The protein localises to the endosome. The protein resides in the multivesicular body membrane. It is found in the prevacuolar compartment membrane. The enzyme catalyses a triacylglycerol + H2O = a diacylglycerol + a fatty acid + H(+). Functionally, lipase which is essential for lysis of subvacuolar cytoplasm to vacuole targeted bodies and intravacuolar autophagic bodies. Involved in the lysis of intravacuolar multivesicular body (MVB) vesicles. The intravacuolar membrane disintegration by atg15 is critical to life span extension. This chain is Putative lipase atg15 (atg15), found in Emericella nidulans (strain FGSC A4 / ATCC 38163 / CBS 112.46 / NRRL 194 / M139) (Aspergillus nidulans).